The primary structure comprises 124 residues: Large ribosomal subunit protein bL36m (124 aa).

Belongs to the bacterial ribosomal protein bL36 family. Component of the mitochondrial large ribosomal subunit (mt-LSU). Mature N.crassa 74S mitochondrial ribosomes consist of a small (37S) and a large (54S) subunit. The 37S small subunit contains a 16S ribosomal RNA (16S mt-rRNA) and 32 different proteins. The 54S large subunit contains a 23S rRNA (23S mt-rRNA) and 42 different proteins. bL36m has a zinc binding site.

The protein localises to the mitochondrion. In terms of biological role, component of the mitochondrial ribosome (mitoribosome), a dedicated translation machinery responsible for the synthesis of mitochondrial genome-encoded proteins, including at least some of the essential transmembrane subunits of the mitochondrial respiratory chain. The mitoribosomes are attached to the mitochondrial inner membrane and translation products are cotranslationally integrated into the membrane. The chain is Large ribosomal subunit protein bL36m (rtc6) from Neurospora crassa (strain ATCC 24698 / 74-OR23-1A / CBS 708.71 / DSM 1257 / FGSC 987).